The chain runs to 122 residues: Large ribosomal subunit protein uL14 (122 aa).

The protein belongs to the universal ribosomal protein uL14 family. Part of the 50S ribosomal subunit. Forms a cluster with proteins L3 and L19. In the 70S ribosome, L14 and L19 interact and together make contacts with the 16S rRNA in bridges B5 and B8.

Functionally, binds to 23S rRNA. Forms part of two intersubunit bridges in the 70S ribosome. This is Large ribosomal subunit protein uL14 from Phenylobacterium zucineum (strain HLK1).